A 595-amino-acid polypeptide reads, in one-letter code: Chaperone protein HscA homolog (595 aa).

It belongs to the heat shock protein 70 family.

Chaperone involved in the maturation of iron-sulfur cluster-containing proteins. Has a low intrinsic ATPase activity which is markedly stimulated by HscB. The sequence is that of Chaperone protein HscA homolog from Rickettsia rickettsii (strain Iowa).